Here is a 480-residue protein sequence, read N- to C-terminus: REST corepressor 1 (480 aa).

The segment at 1 to 105 (MPAMVEKGPE…GGGMRVGPQY (105 aa)) is disordered. Low complexity-rich tracts occupy residues 21-58 (AASA…AAAA) and 66-89 (SLAA…SGSS). The interaction with HDAC1 stretch occupies residues 72–251 (PNGNSGSNSW…RHARKQKRER (180 aa)). The ELM2 domain occupies 97–183 (GGMRVGPQYQ…KSLADLPNFT (87 aa)). Lysine 116 is covalently cross-linked (Glycyl lysine isopeptide (Lys-Gly) (interchain with G-Cter in SUMO2)). Serine 121 is modified (phosphoserine). Positions 184-235 (PFPDEWTVEDKVLFEQAFSFHGKTFHRIQQMLPDKSIASLVKFYYSWKKTRT) constitute an SANT 1 domain. Residues 238 to 265 (SVMDRHARKQKREREESEDELEETNGSN) are a coiled coil. The tract at residues 238-308 (SVMDRHARKQ…AKNRAKRKPP (71 aa)) is disordered. A Phosphoserine modification is found at serine 254. The segment covering 272–282 (DPNKESKKEVP) has biased composition (basic and acidic residues). The interaction with KDM1A stretch occupies residues 290 to 378 (VKKEKHSTQA…LPEVIQKCNA (89 aa)). Residue lysine 291 forms a Glycyl lysine isopeptide (Lys-Gly) (interchain with G-Cter in SUMO2) linkage. Residues 328-363 (ATTVLRQLDMELVSIKRQIQNIKQTNSALKEKLDGG) are a coiled coil. Residues 375 to 426 (KCNARWTTEEQLLAVQAIRKYGRDFQAISDVIGNKSVVQVKNFFVNYRRRFN) form the SANT 2 domain. The interval 436-466 (AEHGKDETNGPANQKPVKSPESSIKIPEEED) is disordered. At serine 454 the chain carries Phosphoserine. Lysine 460 participates in a covalent cross-link: Glycyl lysine isopeptide (Lys-Gly) (interchain with G-Cter in SUMO2).

It belongs to the CoREST family. Component of a BHC histone deacetylase complex that contains HDAC1, HDAC2, HMG20B/BRAF35, KDM1A, RCOR1/CoREST and PHF21A/BHC80. The BHC complex may also contain ZMYM2, ZNF217, ZMYM3, GSE1 and GTF2I. Interacts with REST. Interacts with the SMARCE1/BAF57, suggesting that the BHC complex may recruit the ATP-dependent chromatin-remodeling SWI-SNF complex. Interacts directly with GFI1 and GFI1B in a RCOR/GFI/KDM1A/HDAC complex. Interacts with INMS1. Interacts with SOX2. Expressed in the external germinal layer (EGL) and internal granular layer (IGL) of the cerebellum and in Purkinje cells (at protein level).

Its subcellular location is the nucleus. In terms of biological role, essential component of the BHC complex, a corepressor complex that represses transcription of neuron-specific genes in non-neuronal cells. The BHC complex is recruited at RE1/NRSE sites by REST and acts by deacetylating and demethylating specific sites on histones, thereby acting as a chromatin modifier. In the BHC complex, it serves as a molecular beacon for the recruitment of molecular machinery, including MeCP2 and SUV39H1, that imposes silencing across a chromosomal interval. Plays a central role in demethylation of Lys-4 of histone H3 by promoting demethylase activity of KDM1A on core histones and nucleosomal substrates. It also protects KDM1A from the proteasome. Component of a RCOR/GFI/KDM1A/HDAC complex that suppresses, via histone deacetylase (HDAC) recruitment, a number of genes implicated in multilineage blood cell development and controls hematopoietic differentiation. In Mus musculus (Mouse), this protein is REST corepressor 1 (Rcor1).